The chain runs to 151 residues: Small ribosomal subunit protein uS15 (151 aa).

A disordered region spans residues 1 to 20 (MARLHSGKRGSSGSTRPLRT).

Belongs to the universal ribosomal protein uS15 family. In terms of assembly, part of the 30S ribosomal subunit.

The chain is Small ribosomal subunit protein uS15 from Methanococcus maripaludis (strain DSM 14266 / JCM 13030 / NBRC 101832 / S2 / LL).